A 112-amino-acid polypeptide reads, in one-letter code: uncharacterized protein (112 aa).

This is an uncharacterized protein from Aquifex aeolicus (strain VF5).